A 293-amino-acid polypeptide reads, in one-letter code: Acetyl-coenzyme A carboxylase carboxyl transferase subunit beta (293 aa).

The 265-residue stretch at 29–293 folds into the CoA carboxyltransferase N-terminal domain; sequence LWSKCPECGL…GSKSLELTNA (265 aa). Cysteine 33, cysteine 36, cysteine 52, and cysteine 55 together coordinate Zn(2+). The C4-type zinc-finger motif lies at 33 to 55; it reads CPECGLVVYLKDLRLNASVCAGC.

This sequence belongs to the AccD/PCCB family. Acetyl-CoA carboxylase is a heterohexamer composed of biotin carboxyl carrier protein (AccB), biotin carboxylase (AccC) and two subunits each of ACCase subunit alpha (AccA) and ACCase subunit beta (AccD). Requires Zn(2+) as cofactor.

The protein resides in the cytoplasm. It catalyses the reaction N(6)-carboxybiotinyl-L-lysyl-[protein] + acetyl-CoA = N(6)-biotinyl-L-lysyl-[protein] + malonyl-CoA. Its pathway is lipid metabolism; malonyl-CoA biosynthesis; malonyl-CoA from acetyl-CoA: step 1/1. In terms of biological role, component of the acetyl coenzyme A carboxylase (ACC) complex. Biotin carboxylase (BC) catalyzes the carboxylation of biotin on its carrier protein (BCCP) and then the CO(2) group is transferred by the transcarboxylase to acetyl-CoA to form malonyl-CoA. The sequence is that of Acetyl-coenzyme A carboxylase carboxyl transferase subunit beta from Synechococcus sp. (strain CC9902).